Here is a 259-residue protein sequence, read N- to C-terminus: Ribonuclease PH (259 aa).

Residues arginine 88 and 126 to 128 (GTR) contribute to the phosphate site.

The protein belongs to the RNase PH family. Homohexameric ring arranged as a trimer of dimers.

The enzyme catalyses tRNA(n+1) + phosphate = tRNA(n) + a ribonucleoside 5'-diphosphate. Phosphorolytic 3'-5' exoribonuclease that plays an important role in tRNA 3'-end maturation. Removes nucleotide residues following the 3'-CCA terminus of tRNAs; can also add nucleotides to the ends of RNA molecules by using nucleoside diphosphates as substrates, but this may not be physiologically important. Probably plays a role in initiation of 16S rRNA degradation (leading to ribosome degradation) during starvation. The protein is Ribonuclease PH of Mycobacterium bovis (strain BCG / Pasteur 1173P2).